Reading from the N-terminus, the 114-residue chain is Small nuclear ribonucleoprotein SmD1a (114 aa).

The Sm domain maps to 2–74; sequence KLVRFLMKLN…IRYYILPDSL (73 aa). A disordered region spans residues 87–114; the sequence is VKPKKPVAGKAVGRGRGRGRGRGRGRGR. 8 consecutive repeat copies span residues 99–100, 101–102, 103–104, 105–106, 107–108, 109–110, 111–112, and 113–114. The interval 99 to 114 is 8 X 2 AA tandem repeats of G-R; it reads GRGRGRGRGRGRGRGR.

This sequence belongs to the snRNP core protein family.

Its subcellular location is the nucleus. The protein resides in the nucleus speckle. It localises to the nucleolus. Functionally, involved in splicing regulation. Facilitates post-transcriptional gene silencing (PTGS) by limiting the degradation of transgene aberrant RNAs by the RNA quality control (RQC) machinery, thus favoring their entry into cytoplasmic siRNA bodies where they can trigger PTGS. Does not participate in the production of small RNAs. This Arabidopsis thaliana (Mouse-ear cress) protein is Small nuclear ribonucleoprotein SmD1a.